A 42-amino-acid polypeptide reads, in one-letter code: Beta-defensin 6 (42 aa).

Residue Gln-1 is modified to Pyrrolidone carboxylic acid. Disulfide bonds link Cys-9–Cys-38, Cys-16–Cys-31, and Cys-21–Cys-39.

It belongs to the beta-defensin family. As to expression, neutrophilic granules.

The protein localises to the secreted. Has bactericidal activity. Active against E.coli ML35 and S.aureus 502A. The protein is Beta-defensin 6 (DEFB6) of Bos taurus (Bovine).